The sequence spans 307 residues: MAKKKIAISCGDIQGVGLELILKSHKEVNAFCEPLYLIDGELLERANQLLHNAYETKTLNALAIHSPLPLLNSSTIGKISAQSGAYSFESFKKACELADSEEVDGICTLPINKLAWQQAQIPFVGHTDFLKQRYKEHQIIMMLGCSKLFVGLFSDHVPLSAVSQLIQVEALVKFLLAFQKSTQAKIVQVCGFNPHAGEEGLFGKEDEKILKAIQKSNQTLGFECFLGPLPADSAFAPNKRKITPFYVSMSHDVGLAPLKALYFDESINVSLNAPILRVSTDHGTAFDIAYQNKANNKSYLNAIKYLA.

Residues His126 and Thr127 each coordinate substrate. His156, His195, and His251 together coordinate a divalent metal cation. Substrate-binding residues include Lys259, Asn268, and Arg277.

The protein belongs to the PdxA family. In terms of assembly, homodimer. It depends on Zn(2+) as a cofactor. The cofactor is Mg(2+). Co(2+) is required as a cofactor.

It is found in the cytoplasm. It carries out the reaction 4-(phosphooxy)-L-threonine + NAD(+) = 3-amino-2-oxopropyl phosphate + CO2 + NADH. The protein operates within cofactor biosynthesis; pyridoxine 5'-phosphate biosynthesis; pyridoxine 5'-phosphate from D-erythrose 4-phosphate: step 4/5. Its function is as follows. Catalyzes the NAD(P)-dependent oxidation of 4-(phosphooxy)-L-threonine (HTP) into 2-amino-3-oxo-4-(phosphooxy)butyric acid which spontaneously decarboxylates to form 3-amino-2-oxopropyl phosphate (AHAP). The sequence is that of 4-hydroxythreonine-4-phosphate dehydrogenase from Helicobacter pylori (strain P12).